The chain runs to 1226 residues: Phosphatidylinositol 3,4,5-trisphosphate 5-phosphatase 2B (1226 aa).

Residues 6 to 102 (WYHRDISRVR…GLVAPLLYPV (97 aa)) enclose the SH2 domain. Positions 106 to 144 (SEANDESSDGDDEKPGSTFANSPPRAISPTATSPPSSSA) are disordered. Residues 108 to 117 (ANDESSDGDD) are compositionally biased toward acidic residues. A compositionally biased stretch (low complexity) spans 127 to 144 (SPPRAISPTATSPPSSSA). Residues 906–909 (NPAY) carry the NPXY motif motif. Tyrosine 909 is modified (phosphotyrosine). 2 disordered regions span residues 945-964 (RVTG…DFTE) and 985-1035 (SSAA…LSGK). The span at 1011–1025 (HSSNSSLQLQSHKNN) shows a compositional bias: low complexity. The SAM domain maps to 1163–1226 (GAPETVRELL…ILENLPKIWD (64 aa)).

Belongs to the inositol 1,4,5-trisphosphate 5-phosphatase family. In terms of processing, tyrosine phosphorylated by the members of the SRC family after exposure to a diverse array of extracellular stimuli.

It localises to the cytoplasm. It is found in the cytosol. The protein resides in the cytoskeleton. The protein localises to the membrane. Its subcellular location is the cell projection. It localises to the filopodium. It is found in the lamellipodium. The protein resides in the nucleus. The protein localises to the nucleus speckle. It catalyses the reaction a 1,2-diacyl-sn-glycero-3-phospho-(1D-myo-inositol-3,4,5-trisphosphate) + H2O = a 1,2-diacyl-sn-glycero-3-phospho-(1D-myo-inositol-3,4-bisphosphate) + phosphate. Its function is as follows. Phosphatidylinositol (PtdIns) phosphatase that specifically hydrolyzes the 5-phosphate of phosphatidylinositol-3,4,5-trisphosphate (PtdIns(3,4,5)P3) to produce PtdIns(3,4)P2, thereby negatively regulating the PI3K (phosphoinositide 3-kinase) pathways. Plays a central role in regulation of PI3K-dependent insulin signaling, although the precise molecular mechanisms and signaling pathways remain unclear. Part of a signaling pathway that regulates actin cytoskeleton remodeling. Required for the maintenance and dynamic remodeling of actin structures as well as in endocytosis, having a major impact on ligand-induced EGFR internalization and degradation. Participates in regulation of cortical and submembraneous actin. Regulates cell adhesion and cell spreading. Acts as a negative regulator of the FC-gamma-RIIA receptor (FCGR2A). Mediates signaling from the FC-gamma-RIIB receptor (FCGR2B), playing a central role in terminating signal transduction from activating immune/hematopoietic cell receptor systems. May also hydrolyze PtdIns(1,3,4,5)P4, and could thus affect the levels of the higher inositol polyphosphates like InsP6. The sequence is that of Phosphatidylinositol 3,4,5-trisphosphate 5-phosphatase 2B (inppl1b) from Danio rerio (Zebrafish).